We begin with the raw amino-acid sequence, 372 residues long: Rab9 effector protein with kelch motifs (372 aa).

Kelch repeat units follow at residues 49–95 (KVFI…FIPS), 100–146 (SIWV…TSSA), 151–203 (QLYV…AAGT), 204–250 (KLFI…SAVA), and 254–303 (HLYV…IIPW). Residues 309–341 (SEKEDSNSATVNRDAEKGDSTEKGVTQGGDSQE) are disordered. Over residues 321–330 (RDAEKGDSTE) the composition is skewed to basic and acidic residues. Residues 349–372 (LCFVFGGMNTEGEIYDDCIVTAVD) form a Kelch 6 repeat.

As to quaternary structure, interacts with PIKFYVE; the interaction recruits RABEPK to the endosomal membrane. Interacts with RAB9 in its GTP-bound conformation. In terms of processing, phosphorylated on Ser residues by PIKFYVE.

It localises to the cytoplasm. The protein resides in the endosome membrane. Functionally, rab9 effector required for endosome to trans-Golgi network (TGN) transport. This chain is Rab9 effector protein with kelch motifs (RABEPK), found in Bos taurus (Bovine).